Reading from the N-terminus, the 236-residue chain is Syntaxin-8 (236 aa).

Topologically, residues 1 to 215 (MAPDPWFSTY…LVDRKSTSCG (215 aa)) are cytoplasmic. Residues 42–65 (VTIRALLQKLKEKIALLKDLLLRA) adopt a coiled-coil conformation. The t-SNARE coiled-coil homology domain maps to 145-207 (QKIIQEQDAG…RTETRRVNLV (63 aa)). Ser160 is subject to Phosphoserine. Residues 216–232 (MIMVILLLLVAIVVVAV) form a helical; Anchor for type IV membrane protein membrane-spanning segment. The Vesicular segment spans residues 233–236 (WPTK).

It belongs to the syntaxin family. Forms a SNARE complex with STX7, VTI1B and VAMP8 which functions in the homotypic fusion of late endosomes. Part of the SNARE core complex containing STX7, VAMP8 and VTI1B. Interacts with VAMP8. Interacts with HECTD3. Interacts with TPC1. In terms of processing, ubiquitinated by HECTD3.

The protein localises to the membrane. Vesicle trafficking protein that functions in the early secretory pathway, possibly by mediating retrograde transport from cis-Golgi membranes to the ER. The chain is Syntaxin-8 (STX8) from Bos taurus (Bovine).